A 239-amino-acid chain; its full sequence is Fatty acid metabolism regulator protein (239 aa).

Positions 6 to 74 (QSPAGFAEEY…HGKPTKVNNF (69 aa)) constitute an HTH gntR-type domain. A DNA-binding region (H-T-H motif) is located at residues 34–53 (ERELSELIGVTRTTLREVLQ).

As to quaternary structure, homodimer.

Its subcellular location is the cytoplasm. Functionally, multifunctional regulator of fatty acid metabolism. Represses transcription of at least eight genes required for fatty acid transport and beta-oxidation including fadA, fadB, fadD, fadL and fadE. Activates transcription of at least three genes required for unsaturated fatty acid biosynthesis: fabA, fabB and iclR, the gene encoding the transcriptional regulator of the aceBAK operon encoding the glyoxylate shunt enzymes. Binding of FadR is specifically inhibited by long chain fatty acyl-CoA compounds. The sequence is that of Fatty acid metabolism regulator protein from Salmonella typhimurium (strain LT2 / SGSC1412 / ATCC 700720).